The sequence spans 375 residues: Homoserine O-succinyltransferase (375 aa).

In terms of domain architecture, AB hydrolase-1 spans 48-358; that stretch reads NAVLVCHALS…PAGHDSFLLD (311 aa). Residue Ser154 is the Nucleophile of the active site. Arg224 serves as a coordination point for substrate. Residues Asp319 and His352 contribute to the active site. Residue Asp353 coordinates substrate.

This sequence belongs to the AB hydrolase superfamily. MetX family. Homodimer.

It is found in the cytoplasm. It catalyses the reaction L-homoserine + succinyl-CoA = O-succinyl-L-homoserine + CoA. It functions in the pathway amino-acid biosynthesis; L-methionine biosynthesis via de novo pathway; O-succinyl-L-homoserine from L-homoserine: step 1/1. Its function is as follows. Transfers a succinyl group from succinyl-CoA to L-homoserine, forming succinyl-L-homoserine. This is Homoserine O-succinyltransferase from Azoarcus sp. (strain BH72).